A 415-amino-acid chain; its full sequence is uncharacterized protein (415 aa).

Positions 66, 72, 75, and 149 each coordinate [4Fe-4S] cluster. S-adenosyl-L-methionine-binding residues include Q249, F276, E296, and D344. C370 (nucleophile) is an active-site residue.

This sequence belongs to the class I-like SAM-binding methyltransferase superfamily. RNA M5U methyltransferase family.

This is an uncharacterized protein from Brucella suis biovar 1 (strain 1330).